We begin with the raw amino-acid sequence, 439 residues long: Glutamyl-tRNA reductase (439 aa).

Residues 48-51, Ser107, 112-114, and Gln118 contribute to the substrate site; these read TCNR and EPQ. Catalysis depends on Cys49, which acts as the Nucleophile. 187–192 serves as a coordination point for NADP(+); that stretch reads GAGEMA.

Belongs to the glutamyl-tRNA reductase family. Homodimer.

It catalyses the reaction (S)-4-amino-5-oxopentanoate + tRNA(Glu) + NADP(+) = L-glutamyl-tRNA(Glu) + NADPH + H(+). Its pathway is porphyrin-containing compound metabolism; protoporphyrin-IX biosynthesis; 5-aminolevulinate from L-glutamyl-tRNA(Glu): step 1/2. In terms of biological role, catalyzes the NADPH-dependent reduction of glutamyl-tRNA(Glu) to glutamate 1-semialdehyde (GSA). This chain is Glutamyl-tRNA reductase, found in Maridesulfovibrio salexigens (strain ATCC 14822 / DSM 2638 / NCIMB 8403 / VKM B-1763) (Desulfovibrio salexigens).